A 229-amino-acid chain; its full sequence is Probable GTP-binding protein EngB (229 aa).

An EngB-type G domain is found at 53 to 228; it reads DLPEVAFAGR…RAEIVRLCID (176 aa). Residues 61-68, 88-92, 106-109, 173-176, and 207-209 each bind GTP; these read GRSNVGKS, GRTRE, DLPG, TKAD, and TSS. Residues Ser-68 and Thr-90 each contribute to the Mg(2+) site.

This sequence belongs to the TRAFAC class TrmE-Era-EngA-EngB-Septin-like GTPase superfamily. EngB GTPase family. Mg(2+) serves as cofactor.

Necessary for normal cell division and for the maintenance of normal septation. The polypeptide is Probable GTP-binding protein EngB (Caulobacter vibrioides (strain NA1000 / CB15N) (Caulobacter crescentus)).